A 330-amino-acid chain; its full sequence is Elongation factor Ts (330 aa).

The interval 79-82 (TDFV) is involved in Mg(2+) ion dislocation from EF-Tu.

It belongs to the EF-Ts family.

The protein localises to the cytoplasm. Functionally, associates with the EF-Tu.GDP complex and induces the exchange of GDP to GTP. It remains bound to the aminoacyl-tRNA.EF-Tu.GTP complex up to the GTP hydrolysis stage on the ribosome. In Bacteroides thetaiotaomicron (strain ATCC 29148 / DSM 2079 / JCM 5827 / CCUG 10774 / NCTC 10582 / VPI-5482 / E50), this protein is Elongation factor Ts.